The primary structure comprises 641 residues: 1-deoxy-D-xylulose-5-phosphate synthase (641 aa).

Thiamine diphosphate-binding positions include His71 and 112–114 (SHA). Asp144 serves as a coordination point for Mg(2+). Residues 145 to 146 (GA), Asn174, Tyr285, and Glu366 each bind thiamine diphosphate. Residue Asn174 participates in Mg(2+) binding.

It belongs to the transketolase family. DXPS subfamily. In terms of assembly, homodimer. Mg(2+) is required as a cofactor. It depends on thiamine diphosphate as a cofactor.

It carries out the reaction D-glyceraldehyde 3-phosphate + pyruvate + H(+) = 1-deoxy-D-xylulose 5-phosphate + CO2. It functions in the pathway metabolic intermediate biosynthesis; 1-deoxy-D-xylulose 5-phosphate biosynthesis; 1-deoxy-D-xylulose 5-phosphate from D-glyceraldehyde 3-phosphate and pyruvate: step 1/1. Functionally, catalyzes the acyloin condensation reaction between C atoms 2 and 3 of pyruvate and glyceraldehyde 3-phosphate to yield 1-deoxy-D-xylulose-5-phosphate (DXP). The protein is 1-deoxy-D-xylulose-5-phosphate synthase of Mycobacteroides abscessus (strain ATCC 19977 / DSM 44196 / CCUG 20993 / CIP 104536 / JCM 13569 / NCTC 13031 / TMC 1543 / L948) (Mycobacterium abscessus).